We begin with the raw amino-acid sequence, 314 residues long: Bifunctional pinoresinol-lariciresinol reductase 3 (314 aa).

NADP(+) is bound by residues 11-17 (GGTGFIG), arginine 36, and lysine 45. Lysine 138 functions as the Proton acceptor in the catalytic mechanism. Residue arginine 142 coordinates NADP(+). Histidine 272 serves as a coordination point for substrate.

This sequence belongs to the NmrA-type oxidoreductase family. Isoflavone reductase subfamily. In terms of assembly, dimer.

The catalysed reaction is (-)-lariciresinol + NADP(+) = (-)-pinoresinol + NADPH + H(+). It catalyses the reaction (+)-secoisolariciresinol + NADP(+) = (-)-lariciresinol + NADPH + H(+). In terms of biological role, reductase involved in lignan biosynthesis. Catalyzes the enantioselective sequential conversion of (-)-pinoresinol into (-)-lariciresinol and of (-)-lariciresinol into (+)-secoisolariciresinol. Abstracts the 4R-hydride from the NADPH cofactor during catalysis. The polypeptide is Bifunctional pinoresinol-lariciresinol reductase 3 (Thuja plicata (Western red-cedar)).